The following is a 294-amino-acid chain: tRNA pseudouridine synthase B (294 aa).

The active-site Nucleophile is the D39.

Belongs to the pseudouridine synthase TruB family. Type 1 subfamily.

It carries out the reaction uridine(55) in tRNA = pseudouridine(55) in tRNA. Its function is as follows. Responsible for synthesis of pseudouridine from uracil-55 in the psi GC loop of transfer RNAs. This is tRNA pseudouridine synthase B from Streptococcus pyogenes serotype M28 (strain MGAS6180).